Consider the following 689-residue polypeptide: MTDKTFLVEIGTEELPPKALRNLAESFAANFTAELDAANLAHGEVSWFAAPRRLALKVARLSASQPDREVEKRGPAIAQAFDAEGKTTKAAEGWARGCGITVEQAERLTTDKGEWLLYRAHAKGEQAQALLAGMISTALSKLPIPKLMRWSDKETQFVRPVHTVTMLLGDELIPGQVLGIHSARTLRGHRFMGEAEFTIDSADQYPQILLERGKVVADYDARKAKIKADAEEAARKIGGNADLSDSLLEEVTSLVEWPVVLTAKFEEKFLAVPSEALVYTMKGDQKYFPVYDNSGNLLPNFIFVANIESKDPQQIISGNEKVVRPRLADAEFFFNTDRKKRLEDHLPRLETVLFQQQLGTLRDKTDRIQALAGWVAGQIGADVNHATRAGLLSKCDLMTNMVFEFTDTQGVMGMHYARHDGEAEDVAVALNEQYQPRFAGDELPSSAVACALAIADKMDTLAGIFGIGQHPKGDKDPFALRRAALGVLRIIVEKRLPLDLQTLTEEAVRLYGAKLTNANVVDDVIEFMLGRFRAWYQEEGHSVDTIQAVLARRPTRPADFDARVKAVSHFRSLDAAAALAAANKRVSNILAKSTDTLNESVNAAVLKDAAEITLATHLVVLRDKLTPLFAEGRYQEALVELASLREPVDAFFDQVMVMAEDEQVRVNRLTLLSQLRELFLQVADISVLQ.

Belongs to the class-II aminoacyl-tRNA synthetase family. As to quaternary structure, tetramer of two alpha and two beta subunits.

It is found in the cytoplasm. It catalyses the reaction tRNA(Gly) + glycine + ATP = glycyl-tRNA(Gly) + AMP + diphosphate. This Pectobacterium carotovorum subsp. carotovorum (strain PC1) protein is Glycine--tRNA ligase beta subunit.